A 631-amino-acid polypeptide reads, in one-letter code: Probable sulfate transporter 3.3 (631 aa).

Topologically, residues 1 to 69 (MEVHKVVAPP…EYSFSLLKSD (69 aa)) are cytoplasmic. Residues 70-90 (VVSGLTIASLAIPQGISYAKL) form a helical membrane-spanning segment. The Extracellular segment spans residues 91 to 92 (AN). Residues 93 to 113 (LPPIVGLYSSFVPPLVYAVLG) traverse the membrane as a helical segment. The Cytoplasmic segment spans residues 114-117 (SSRD). The helical transmembrane segment at 118–138 (LAVGPVSIASLILGSMLRQQV) threads the bilayer. Residues 139–144 (SPVDDP) lie on the Extracellular side of the membrane. The chain crosses the membrane as a helical span at residues 145 to 165 (VLFLQLAFSSTFFAGLFQASL). Residues 166–171 (GILRLG) lie on the Cytoplasmic side of the membrane. The chain crosses the membrane as a helical span at residues 172–192 (FIIDFLSKATLIGFMGGAAII). Residues 193–223 (VSLQQLKGLLGITHFTKHMSVVPVLSSVFQH) lie on the Extracellular side of the membrane. Residues 224–244 (TNEWSWQTIVMGVCFLLFLLS) form a helical membrane-spanning segment. The Cytoplasmic portion of the chain corresponds to 245-256 (TRHLSMKKPKLF). Residues 257–277 (WVSAGAPLLSVIVSTLLVFVF) traverse the membrane as a helical segment. The Extracellular portion of the chain corresponds to 278 to 309 (RAERHGISVIGKLPEGLNPPSWNMLQFHGSHL). The chain crosses the membrane as a helical span at residues 310–330 (ALVAKTGLVTGIVSLTEGIAV). The Cytoplasmic segment spans residues 331–347 (GRTFAALKNYHVDGNKE). Residues 348–368 (MIAIGLMNVVGSATSCYVTTG) traverse the membrane as a helical segment. Topologically, residues 369-384 (AFSRSAVNNNAGAKTA) are extracellular. A helical transmembrane segment spans residues 385 to 405 (VSNIVMSVTVMVTLLFLMPLF). Residues 406–410 (EYTPN) are Cytoplasmic-facing. A helical transmembrane segment spans residues 411 to 431 (VVLGAIIVTAVIGLIDLPAAC). The Extracellular portion of the chain corresponds to 432 to 441 (HIWKIDKFDF). Residues 442 to 462 (LVMLCAFFGVIFLSVQNGLAI) traverse the membrane as a helical segment. The Cytoplasmic portion of the chain corresponds to 463 to 631 (AVGLSLFKIL…SLKGPSLSNV (169 aa)). The STAS domain occupies 497 to 621 (HYKEAQRIPG…LTVAEAVASL (125 aa)).

This sequence belongs to the SLC26A/SulP transporter (TC 2.A.53) family. As to expression, expressed only in leaves.

Its subcellular location is the membrane. In terms of biological role, h(+)/sulfate cotransporter that may play a role in the regulation of sulfate assimilation. This is Probable sulfate transporter 3.3 (SULTR3;3) from Arabidopsis thaliana (Mouse-ear cress).